Reading from the N-terminus, the 277-residue chain is Methyltransferase adrK (277 aa).

Residues 123-124 (DL), 150-151 (DV), and 151-152 (VL) contribute to the S-adenosyl-L-methionine site.

This sequence belongs to the class I-like SAM-binding methyltransferase superfamily. In terms of assembly, homodimer.

The protein operates within secondary metabolite biosynthesis; terpenoid biosynthesis. Functionally, methyltransferase; part of the gene cluster that mediates the biosynthesis of andrastins, meroterpenoid compounds that exhibit inhibitory activity against ras farnesyltransferase, suggesting that they could be promising leads for antitumor agents. The first step of the pathway is the synthesis of 3,5-dimethylorsellinic acid (DMOA) by the polyketide synthase adrD via condensation of one acetyl-CoA starter unit with 3 malonyl-CoA units and 2 methylations. DMAO is then converted to farnesyl-DMAO by the prenyltransferase adrG. The methyltransferase adrK catalyzes the methylation of the carboxyl group of farnesyl-DMAO to farnesyl-DMAO methyl ester which is further converted to epoxyfarnesyl-DMAO methyl ester by the FAD-dependent monooxygenase adrH. The terpene cyclase adrI then catalyzes the carbon skeletal rearrangement to generate the andrastin E, the first compound in the pathway having the andrastin scaffold, with the tetracyclic ring system. The post-cyclization tailoring enzymes adrF, adrE, adrJ, and adrA, are involved in the conversion of andrastin E into andrastin A. The short chain dehydrogenase adrF is responsible for the oxidation of the C-3 a hydroxyl group of andrastin E to yield the corresponding ketone, andrastin D. The ketoreductase adrE stereoselectively reduces the carbonyl moiety to reverse the stereochemistry of the C-3 position to yield andrastin F. The acetyltransferase adrJ is the acetyltransferase that attaches the acetyl group to the C-3 hydroxyl group of andrastin F to yield andrastin C. Finally, the cytochrome P450 monooxygenase adrA catalyzes two sequential oxidation reactions of the C-23 methyl group, to generate the corresponding alcohol andrastin B, and aldehyde andrastin A. This chain is Methyltransferase adrK, found in Penicillium rubens (strain ATCC 28089 / DSM 1075 / NRRL 1951 / Wisconsin 54-1255) (Penicillium chrysogenum).